A 258-amino-acid chain; its full sequence is MKCFQKLYIFILILIVLMAGCESNKITGDSKETQIKKSFAKTLDVYPTKNLEDFYDREGYRDGEFKKGDKGKWVIRSEITTELKNENMVSKGMVIRLNRNSRTCTGEYFVRIVKEDSEGKVYSDERKYPVKMENNKIIPLKPIDDEKVKKEIEEFKFFVQYGNFKELENYKEDEVSYNPEVPIYSAKYQLKNSDYNVEQLRKRYNIPTKKAPKLLLKGSGNLKDSSVGYKNIEFTFIENKEENIYFTDSIYFNPSVDK.

Positions 1 to 20 are cleaved as a signal peptide; the sequence is MKCFQKLYIFILILIVLMAG. Cysteine 21 is lipidated: N-palmitoyl cysteine. Cysteine 21 carries S-diacylglycerol cysteine lipidation.

Belongs to the staphylococcal tandem lipoprotein family.

The protein resides in the cell membrane. This is an uncharacterized protein from Staphylococcus aureus (strain bovine RF122 / ET3-1).